A 239-amino-acid polypeptide reads, in one-letter code: Serine protease SplD (239 aa).

A signal peptide spans 1 to 36 (MNKNIIIKSIAALTILTSITGVGTTVVDGIQQTAKA). Catalysis depends on charge relay system residues histidine 75, aspartate 114, and serine 192.

Belongs to the peptidase S1B family.

The protein localises to the secreted. This is Serine protease SplD (splD) from Staphylococcus aureus (strain COL).